The following is a 180-amino-acid chain: Large ribosomal subunit protein uL6 (180 aa).

Belongs to the universal ribosomal protein uL6 family. As to quaternary structure, part of the 50S ribosomal subunit.

Functionally, this protein binds to the 23S rRNA, and is important in its secondary structure. It is located near the subunit interface in the base of the L7/L12 stalk, and near the tRNA binding site of the peptidyltransferase center. The polypeptide is Large ribosomal subunit protein uL6 (Clostridium botulinum (strain 657 / Type Ba4)).